The following is a 216-amino-acid chain: Probable GTP-binding protein EngB (216 aa).

Residues 27-201 enclose the EngB-type G domain; the sequence is EGIEVAFAGR…REKLDTWFSE (175 aa). GTP is bound by residues 35–42, 62–66, 80–83, 147–150, and 180–182; these read GRSNAGKS, GRTQL, DLPG, TKAD, and FSS. Mg(2+)-binding residues include serine 42 and threonine 64.

Belongs to the TRAFAC class TrmE-Era-EngA-EngB-Septin-like GTPase superfamily. EngB GTPase family. The cofactor is Mg(2+).

Necessary for normal cell division and for the maintenance of normal septation. This chain is Probable GTP-binding protein EngB, found in Yersinia pestis bv. Antiqua (strain Angola).